The following is a 252-amino-acid chain: Type III pantothenate kinase (252 aa).

Residue 6–13 coordinates ATP; sequence DIGNTSTA. Position 104–107 (104–107) interacts with substrate; it reads GADR. Asp-106 serves as the catalytic Proton acceptor. A K(+)-binding site is contributed by Asp-128. Thr-131 contributes to the ATP binding site. Thr-183 contributes to the substrate binding site.

Belongs to the type III pantothenate kinase family. Homodimer. The cofactor is NH4(+). K(+) is required as a cofactor.

The protein resides in the cytoplasm. It carries out the reaction (R)-pantothenate + ATP = (R)-4'-phosphopantothenate + ADP + H(+). Its pathway is cofactor biosynthesis; coenzyme A biosynthesis; CoA from (R)-pantothenate: step 1/5. Functionally, catalyzes the phosphorylation of pantothenate (Pan), the first step in CoA biosynthesis. This chain is Type III pantothenate kinase, found in Thermus thermophilus (strain ATCC BAA-163 / DSM 7039 / HB27).